The following is a 189-amino-acid chain: MVKMIVGLGNPGSKYEKTKHNIGFMAIDNIVKNLDVTFTDDKNFKAQIGSTFINHEKVCFVKPTTFMNNSGIAVKALLTYYNIDITDLIVIYDDLDMEVSKLRLRSKGSAGGHNGIKSIIAHIGTQEFNRIKVGIGRPLKGMTVINHVMGQFNTEDNIAISLTLDRVVNAVKFYLQENDFEKTMQKFNG.

A tRNA-binding site is contributed by Tyr-15. His-20 serves as the catalytic Proton acceptor. TRNA is bound by residues Phe-66, Asn-68, and Asn-114.

The protein belongs to the PTH family. Monomer.

It localises to the cytoplasm. It carries out the reaction an N-acyl-L-alpha-aminoacyl-tRNA + H2O = an N-acyl-L-amino acid + a tRNA + H(+). Functionally, hydrolyzes ribosome-free peptidyl-tRNAs (with 1 or more amino acids incorporated), which drop off the ribosome during protein synthesis, or as a result of ribosome stalling. Its function is as follows. Catalyzes the release of premature peptidyl moieties from peptidyl-tRNA molecules trapped in stalled 50S ribosomal subunits, and thus maintains levels of free tRNAs and 50S ribosomes. In Streptococcus pyogenes serotype M3 (strain ATCC BAA-595 / MGAS315), this protein is Peptidyl-tRNA hydrolase.